Here is a 444-residue protein sequence, read N- to C-terminus: Trigger factor (444 aa).

In terms of domain architecture, PPIase FKBP-type spans 160–245; sequence DMQVTFDFEG…VKQVEKPKLP (86 aa).

This sequence belongs to the FKBP-type PPIase family. Tig subfamily.

It is found in the cytoplasm. It catalyses the reaction [protein]-peptidylproline (omega=180) = [protein]-peptidylproline (omega=0). Its function is as follows. Involved in protein export. Acts as a chaperone by maintaining the newly synthesized protein in an open conformation. Functions as a peptidyl-prolyl cis-trans isomerase. The chain is Trigger factor from Acinetobacter baylyi (strain ATCC 33305 / BD413 / ADP1).